The sequence spans 470 residues: Chromosomal replication initiator protein DnaA (470 aa).

Residues 1 to 89 form a domain I, interacts with DnaA modulators region; that stretch reads MIESNHVVLW…YNVMVDKTSI (89 aa). The tract at residues 89-130 is domain II; sequence IPNQTVNLEASNRSTAVTPKSIVGGNKAPSFLKAPAVQDLDP. The interval 131–348 is domain III, AAA+ region; it reads HLNPNYNFEN…GIVIAIMARS (218 aa). Positions 176, 178, 179, and 180 each coordinate ATP. The tract at residues 349 to 470 is domain IV, binds dsDNA; it reads TIFNKEIDLD…EIESLLKKKA (122 aa).

It belongs to the DnaA family. As to quaternary structure, oligomerizes as a right-handed, spiral filament on DNA at oriC.

The protein resides in the cytoplasm. In terms of biological role, plays an essential role in the initiation and regulation of chromosomal replication. ATP-DnaA binds to the origin of replication (oriC) to initiate formation of the DNA replication initiation complex once per cell cycle. Binds the DnaA box (a 9 base pair repeat at the origin) and separates the double-stranded (ds)DNA. Forms a right-handed helical filament on oriC DNA; dsDNA binds to the exterior of the filament while single-stranded (ss)DNA is stabiized in the filament's interior. The ATP-DnaA-oriC complex binds and stabilizes one strand of the AT-rich DNA unwinding element (DUE), permitting loading of DNA polymerase. After initiation quickly degrades to an ADP-DnaA complex that is not apt for DNA replication. Binds acidic phospholipids. The chain is Chromosomal replication initiator protein DnaA from Bacteroides thetaiotaomicron (strain ATCC 29148 / DSM 2079 / JCM 5827 / CCUG 10774 / NCTC 10582 / VPI-5482 / E50).